A 308-amino-acid polypeptide reads, in one-letter code: Elongation factor Ts (308 aa).

The interval threonine 80–valine 83 is involved in Mg(2+) ion dislocation from EF-Tu.

It belongs to the EF-Ts family.

Its subcellular location is the cytoplasm. Associates with the EF-Tu.GDP complex and induces the exchange of GDP to GTP. It remains bound to the aminoacyl-tRNA.EF-Tu.GTP complex up to the GTP hydrolysis stage on the ribosome. This Rhodopseudomonas palustris (strain BisB5) protein is Elongation factor Ts.